Here is a 360-residue protein sequence, read N- to C-terminus: Acetylxylan esterase / glucomannan deacetylase (360 aa).

The N-terminal stretch at 1–21 (MKPHALIGLLAGMLLSSSLYA) is a signal peptide. The active-site Nucleophile is the serine 151.

The protein belongs to the carbohydrate esterase 2 (CE2) family.

It is found in the secreted. The enzyme catalyses Deacetylation of xylans and xylo-oligosaccharides.. The protein operates within glycan degradation; xylan degradation. Involved in the degradation of plant cell wall polysaccharides. Catalyzes the deacetylation of acetylated birchwood xylan and glucomannan, with a large preference for the latter, and of the synthetic substrate 4-nitrophenyl acetate (4-NPAc). In Cellvibrio japonicus (strain Ueda107) (Pseudomonas fluorescens subsp. cellulosa), this protein is Acetylxylan esterase / glucomannan deacetylase.